A 237-amino-acid chain; its full sequence is BTB/POZ domain-containing protein KCTD6 (237 aa).

Positions 1-104 are interaction with ANK1 isoform Mu7; sequence MDNGDWGYMM…FYQIEPLIQC (104 aa). Residues 10 to 110 form an interaction with CUL3 region; sequence MSDPVTLNVG…LIQCLNDPRP (101 aa). Positions 12 to 81 constitute a BTB domain; the sequence is DPVTLNVGGH…LRTSELTLPL (70 aa). Positions 113–187 are interaction with USP21; the sequence is PMDTFEEVVE…TFGPCDYHQE (75 aa).

As to quaternary structure, homopentamer. Interacts with KCTD11; KCTD6 and KCTD11 may associate in heteropentameric assemblies. Interacts (via BTB domain) with CUL3; initially a 4:4 stoichiometry has been reported, however, electron microscopy revealed pentameric states with a five-pointed pinwheel shape. The interaction with CUL3 is indicative for a participation in a BCR (BTB-CUL3-RBX1) E3 ubiquitin-protein ligase complex. Interacts with HDAC1; probably indirect as the interaction requires the presence of KCTD11. Interacts with USP21 (preferentially catalytic inactive form). Interacts with ANK1 isoform Mu7; detected in striated muscle. Interacts with USP11. Highly expressed in cerebellum and brain.

It is found in the cytoplasm. Its subcellular location is the myofibril. The protein resides in the sarcomere. It localises to the m line. Its pathway is protein modification; protein ubiquitination. Its function is as follows. Probable substrate-specific adapter of a BCR (BTB-CUL3-RBX1) E3 ubiquitin-protein ligase complex mediating the ubiquitination and subsequent proteasomal degradation of target proteins. Promotes the ubiquitination of HDAC1; the function seems to depend on KCTD11:KCTD6 oligomerization. Can function as antagonist of the Hedgehog pathway by affecting the nuclear transfer of transcription factor GLI1; the function probably occurs via HDAC1 down-regulation, keeping GLI1 acetylated and inactive. Inhibits cell growth and tumorigenicity of medulloblastoma (MDB). Involved in regulating protein levels of ANK1 isoform Mu7 probably implicating CUL3-dependent proteasomal degradation. The sequence is that of BTB/POZ domain-containing protein KCTD6 (Kctd6) from Mus musculus (Mouse).